Here is a 152-residue protein sequence, read N- to C-terminus: Ribonuclease H (152 aa).

Residues 1-142 (MDSKVVIYTD…ADKLAVQGRE (142 aa)) form the RNase H type-1 domain. Residues aspartate 10, glutamate 48, aspartate 70, and aspartate 134 each coordinate Mg(2+).

It belongs to the RNase H family. Monomer. It depends on Mg(2+) as a cofactor.

Its subcellular location is the cytoplasm. The enzyme catalyses Endonucleolytic cleavage to 5'-phosphomonoester.. Its function is as follows. Endonuclease that specifically degrades the RNA of RNA-DNA hybrids. The chain is Ribonuclease H from Rickettsia felis (strain ATCC VR-1525 / URRWXCal2) (Rickettsia azadi).